An 85-amino-acid chain; its full sequence is Beta-mammal/insect toxin Lqhb1 (85 aa).

The N-terminal stretch at 1 to 19 (MKIIIFLIVSSLMLIGVKT) is a signal peptide. The LCN-type CS-alpha/beta domain occupies 20–82 (DNGYLLNKAT…LWAYATNKCN (63 aa)). 4 disulfides stabilise this stretch: cysteine 31–cysteine 81, cysteine 35–cysteine 56, cysteine 42–cysteine 63, and cysteine 46–cysteine 65.

This sequence belongs to the long (4 C-C) scorpion toxin superfamily. Sodium channel inhibitor family. As to expression, expressed by the venom gland.

Its subcellular location is the secreted. Beta toxins bind voltage-independently at site-4 of sodium channels (Nav) and shift the voltage of activation toward more negative potentials thereby affecting sodium channel activation and promoting spontaneous and repetitive firing. Competes, with apparent high affinity, with anti-insect and anti-mammalian beta-toxins for binding to cockroach and rat brain synaptosomes, respectively. Also competes with an anti-mammalian alpha-toxin on binding to rat brain sodium channels. Has a weak effect on cardiac sodium channels and a marked effect on rat brain and skeletal muscle sodium channels. This is Beta-mammal/insect toxin Lqhb1 from Leiurus hebraeus (Hebrew deathstalker scorpion).